Here is a 118-residue protein sequence, read N- to C-terminus: Cycloviolacin-O8 (118 aa).

The signal sequence occupies residues 1–22 (MEMKNMVVGLFLIAAFALPALA). A propeptide spanning residues 23 to 84 (TNFEKDFITH…THSNSINALG (62 aa)) is cleaved from the precursor. A cross-link (cyclopeptide (Gly-Asn)) is located at residues 85–115 (GTLPCGESCVWIPCISSVVGCSCKSKVCYKN). 3 cysteine pairs are disulfide-bonded: C89/C105, C93/C107, and C98/C112. A propeptide spanning residues 116-118 (SLA) is cleaved from the precursor.

In terms of processing, cycloviolacin-O8 is a cyclic peptide. In terms of tissue distribution, expressed in leaves, petals, petioles and roots but not in runners (at protein level).

In terms of biological role, probably participates in a plant defense mechanism. This chain is Cycloviolacin-O8 (Voc1), found in Viola odorata (Sweet violet).